A 134-amino-acid polypeptide reads, in one-letter code: UPF0412 protein YaaI (134 aa).

An N-terminal signal peptide occupies residues 1–23 (MRSVLTISVGLLFGLALSSVAHA).

This sequence belongs to the UPF0412 family.

This Salmonella typhimurium (strain LT2 / SGSC1412 / ATCC 700720) protein is UPF0412 protein YaaI.